A 128-amino-acid polypeptide reads, in one-letter code: Small ribosomal subunit protein uS12 (128 aa).

D89 carries the 3-methylthioaspartic acid modification.

This sequence belongs to the universal ribosomal protein uS12 family. Part of the 30S ribosomal subunit. Contacts proteins S8 and S17. May interact with IF1 in the 30S initiation complex.

Its function is as follows. With S4 and S5 plays an important role in translational accuracy. Interacts with and stabilizes bases of the 16S rRNA that are involved in tRNA selection in the A site and with the mRNA backbone. Located at the interface of the 30S and 50S subunits, it traverses the body of the 30S subunit contacting proteins on the other side and probably holding the rRNA structure together. The combined cluster of proteins S8, S12 and S17 appears to hold together the shoulder and platform of the 30S subunit. This chain is Small ribosomal subunit protein uS12, found in Campylobacter jejuni subsp. jejuni serotype O:6 (strain 81116 / NCTC 11828).